The chain runs to 360 residues: DNA replication and repair protein RecF (360 aa).

Residue 33–40 (GENGSGKT) coordinates ATP.

It belongs to the RecF family.

Its subcellular location is the cytoplasm. Functionally, the RecF protein is involved in DNA metabolism; it is required for DNA replication and normal SOS inducibility. RecF binds preferentially to single-stranded, linear DNA. It also seems to bind ATP. In Rickettsia akari (strain Hartford), this protein is DNA replication and repair protein RecF.